We begin with the raw amino-acid sequence, 254 residues long: 3-deoxy-manno-octulosonate cytidylyltransferase (254 aa).

Belongs to the KdsB family.

Its subcellular location is the cytoplasm. The enzyme catalyses 3-deoxy-alpha-D-manno-oct-2-ulosonate + CTP = CMP-3-deoxy-beta-D-manno-octulosonate + diphosphate. It participates in nucleotide-sugar biosynthesis; CMP-3-deoxy-D-manno-octulosonate biosynthesis; CMP-3-deoxy-D-manno-octulosonate from 3-deoxy-D-manno-octulosonate and CTP: step 1/1. The protein operates within bacterial outer membrane biogenesis; lipopolysaccharide biosynthesis. In terms of biological role, activates KDO (a required 8-carbon sugar) for incorporation into bacterial lipopolysaccharide in Gram-negative bacteria. In Pseudomonas syringae pv. tomato (strain ATCC BAA-871 / DC3000), this protein is 3-deoxy-manno-octulosonate cytidylyltransferase.